The following is an 802-amino-acid chain: Cell division cycle 5-like protein (802 aa).

HTH myb-type domains lie at 1-56 (MPRI…WLDP) and 57-108 (SIKK…DKAA). DNA-binding regions (H-T-H motif) lie at residues 31 to 54 (WSRI…YEWL) and 82 to 104 (WRTI…EFLL). The tract at residues 108-143 (AQRDNEEETTDDPRKLKPGEIDPNPETKPARPDPID) is disordered. Residues 118-127 (DDPRKLKPGE) show a composition bias toward basic and acidic residues. Residue Lys-135 forms a Glycyl lysine isopeptide (Lys-Gly) (interchain with G-Cter in SUMO2) linkage. Residues 142–245 (IDMDEDELEM…DADFRKLRQQ (104 aa)) are a coiled coil. A Nuclear localization signal motif is present at residues 165 to 271 (KKAKRKAREK…KDKQHLKRKK (107 aa)). The tract at residues 200 to 206 (KKRKKKR) is required for interaction with CTNNBL1. A Glycyl lysine isopeptide (Lys-Gly) (interchain with G-Cter in SUMO2) cross-link involves residue Lys-219. Thr-227 carries the post-translational modification Phosphothreonine. The segment covering 246-262 (DLDGELRSEKEGRDRKK) has biased composition (basic and acidic residues). The segment at 246-278 (DLDGELRSEKEGRDRKKDKQHLKRKKESDLPSA) is disordered. An interaction with PPP1R8 region spans residues 260–606 (RKKDKQHLKR…NKKGKTVGFG (347 aa)). Residues Ser-303 and Ser-358 each carry the phosphoserine modification. 6 positions are modified to phosphothreonine: Thr-377, Thr-385, Thr-396, Thr-404, Thr-411, and Thr-415. Residues 409-418 (LSTPFRTPSH) are compositionally biased toward polar residues. Residues 409–459 (LSTPFRTPSHGSEGLTPRSGTTPKPVINSTPGRTPLRDKLNINPEDGMADY) form a disordered region. Position 417 is a phosphoserine (Ser-417). 2 positions are modified to phosphothreonine: Thr-424 and Thr-430. Positions 426-440 (RSGTTPKPVINSTPG) are enriched in polar residues. Ser-437 is modified (phosphoserine). Residues Thr-438 and Thr-442 each carry the phosphothreonine modification. A Glycyl lysine isopeptide (Lys-Gly) (interchain with G-Cter in SUMO2) cross-link involves residue Lys-487. An interaction with DAPK3 region spans residues 501 to 659 (ELEEREIDDT…GELSSEAYNQ (159 aa)). Coiled coils occupy residues 676–701 (RYTR…INRG) and 764–802 (PRRL…KAKF). The interval 706–800 (EAKRAAKMEK…LLLEKETLKA (95 aa)) is interaction with PLRG1.

It belongs to the CEF1 family. Homodimer. Interacts with DAPK3. Component of the precatalytic, catalytic and postcatalytic spliceosome complexes. Part of a spliceosomal 'core' complex consisting of CDC5L, PLRG1, SPF27, CCAP1, CCAP3 and CCAP6. Interacts with PLRG1, Lodestar/TTF2, and NIPP1/PPP1R8. Component of the minor spliceosome, which splices U12-type introns. Within this complex, interacts with SCNM1. Component of the PRP19-CDC5L splicing complex composed of a core complex comprising a homotetramer of PRPF19, CDC5L, PLRG1 and BCAS2, and at least three less stably associated proteins CTNNBL1, CWC15 and HSPA8. Interacts (via its C-terminus) directly in the complex with PRPF19 and BCAS2. Interacts (via its C-terminus) directly with PRGL1 (via its WD40 repeat domain); the interaction is required for mRNA splicing but not for spliceosome assembly. Also interacts with CTNNBL1. Interacts with PRPF19 (via N-terminus). Interacts with USB1. Interacts with DDX41. Phosphorylated on serine and threonine residues. Phosphorylation on Thr-411 and Thr-438 is required for CDC5L-mediated mRNA splicing. Has no effect on subcellular location nor on homodimerization. Phosphorylated in vitro by CDK2. Phosphorylation enhances interaction with PPP1R8.

The protein resides in the nucleus. Its subcellular location is the nucleus speckle. It localises to the cytoplasm. In terms of biological role, DNA-binding protein involved in cell cycle control. May act as a transcription activator. Plays a role in pre-mRNA splicing as core component of precatalytic, catalytic and postcatalytic spliceosomal complexes. Component of the PRP19-CDC5L complex that forms an integral part of the spliceosome and is required for activating pre-mRNA splicing. The PRP19-CDC5L complex may also play a role in the response to DNA damage (DDR). As a component of the minor spliceosome, involved in the splicing of U12-type introns in pre-mRNAs. The polypeptide is Cell division cycle 5-like protein (CDC5L) (Bos taurus (Bovine)).